Here is a 361-residue protein sequence, read N- to C-terminus: Peptide chain release factor 1 (361 aa).

Position 237 is an N5-methylglutamine (Gln237).

Belongs to the prokaryotic/mitochondrial release factor family. In terms of processing, methylated by PrmC. Methylation increases the termination efficiency of RF1.

Its subcellular location is the cytoplasm. Peptide chain release factor 1 directs the termination of translation in response to the peptide chain termination codons UAG and UAA. The polypeptide is Peptide chain release factor 1 (Alcanivorax borkumensis (strain ATCC 700651 / DSM 11573 / NCIMB 13689 / SK2)).